Here is a 62-residue protein sequence, read N- to C-terminus: Teretoxin Tan1.1 (62 aa).

The first 21 residues, 1 to 21, serve as a signal peptide directing secretion; sequence MSCFPVLFVMMLLVSQSVWAF. Positions 22-38 are excised as a propeptide; the sequence is PGPETRDGSVQDAESRR.

The protein belongs to the teretoxin A (TA) superfamily. Post-translationally, contains 2 disulfide bonds. Expressed by the venom duct.

The protein localises to the secreted. This Terebra anilis (Auger snail) protein is Teretoxin Tan1.1.